The following is a 258-amino-acid chain: Tryptophan synthase alpha chain (258 aa).

Active-site proton acceptor residues include Glu-52 and Asp-63.

The protein belongs to the TrpA family. As to quaternary structure, tetramer of two alpha and two beta chains.

It catalyses the reaction (1S,2R)-1-C-(indol-3-yl)glycerol 3-phosphate + L-serine = D-glyceraldehyde 3-phosphate + L-tryptophan + H2O. Its pathway is amino-acid biosynthesis; L-tryptophan biosynthesis; L-tryptophan from chorismate: step 5/5. Functionally, the alpha subunit is responsible for the aldol cleavage of indoleglycerol phosphate to indole and glyceraldehyde 3-phosphate. The protein is Tryptophan synthase alpha chain of Streptococcus pneumoniae (strain JJA).